Consider the following 326-residue polypeptide: Glutaminase 2 (326 aa).

Positions 73, 125, 169, 176, 200, 252, and 270 each coordinate substrate.

This sequence belongs to the glutaminase family. In terms of assembly, homotetramer.

The enzyme catalyses L-glutamine + H2O = L-glutamate + NH4(+). The protein is Glutaminase 2 of Bacillus anthracis.